Reading from the N-terminus, the 464-residue chain is ATP synthase subunit beta (464 aa).

Position 153–160 (153–160 (GGAGVGKT)) interacts with ATP.

This sequence belongs to the ATPase alpha/beta chains family. As to quaternary structure, F-type ATPases have 2 components, CF(1) - the catalytic core - and CF(0) - the membrane proton channel. CF(1) has five subunits: alpha(3), beta(3), gamma(1), delta(1), epsilon(1). CF(0) has three main subunits: a(1), b(2) and c(9-12). The alpha and beta chains form an alternating ring which encloses part of the gamma chain. CF(1) is attached to CF(0) by a central stalk formed by the gamma and epsilon chains, while a peripheral stalk is formed by the delta and b chains.

It localises to the cell membrane. The enzyme catalyses ATP + H2O + 4 H(+)(in) = ADP + phosphate + 5 H(+)(out). Functionally, produces ATP from ADP in the presence of a proton gradient across the membrane. The catalytic sites are hosted primarily by the beta subunits. This is ATP synthase subunit beta from Acetivibrio thermocellus (strain ATCC 27405 / DSM 1237 / JCM 9322 / NBRC 103400 / NCIMB 10682 / NRRL B-4536 / VPI 7372) (Clostridium thermocellum).